A 232-amino-acid polypeptide reads, in one-letter code: Pseudaminic acid cytidylyltransferase (232 aa).

This sequence belongs to the CMP-NeuNAc synthase family. Mg(2+) serves as cofactor.

It carries out the reaction pseudaminate + CTP = CMP-pseudaminate + diphosphate. Functionally, catalyzes the final step in the biosynthesis of pseudaminic acid, a sialic-acid-like sugar that is used to modify flagellin. Mediates the activation of pseudaminic acid with CMP by forming CMP-pseudaminic acid. This is Pseudaminic acid cytidylyltransferase (pseF) from Campylobacter jejuni subsp. jejuni serotype O:23/36 (strain 81-176).